An 885-amino-acid chain; its full sequence is Alanine--tRNA ligase (885 aa).

Residues His569, His573, Cys672, and His676 each contribute to the Zn(2+) site.

It belongs to the class-II aminoacyl-tRNA synthetase family. Requires Zn(2+) as cofactor.

Its subcellular location is the cytoplasm. It carries out the reaction tRNA(Ala) + L-alanine + ATP = L-alanyl-tRNA(Ala) + AMP + diphosphate. Catalyzes the attachment of alanine to tRNA(Ala) in a two-step reaction: alanine is first activated by ATP to form Ala-AMP and then transferred to the acceptor end of tRNA(Ala). Also edits incorrectly charged Ser-tRNA(Ala) and Gly-tRNA(Ala) via its editing domain. This Chlorobaculum tepidum (strain ATCC 49652 / DSM 12025 / NBRC 103806 / TLS) (Chlorobium tepidum) protein is Alanine--tRNA ligase.